Consider the following 419-residue polypeptide: Tol-Pal system protein TolB (419 aa).

The first 19 residues, 1–19 (MFNRIISLFLLLFTGQVIA), serve as a signal peptide directing secretion.

It belongs to the TolB family. As to quaternary structure, the Tol-Pal system is composed of five core proteins: the inner membrane proteins TolA, TolQ and TolR, the periplasmic protein TolB and the outer membrane protein Pal. They form a network linking the inner and outer membranes and the peptidoglycan layer.

The protein resides in the periplasm. Its function is as follows. Part of the Tol-Pal system, which plays a role in outer membrane invagination during cell division and is important for maintaining outer membrane integrity. The polypeptide is Tol-Pal system protein TolB (Legionella pneumophila (strain Corby)).